The chain runs to 484 residues: Solute carrier family 40 member 1 (484 aa).

Transmembrane regions (helical) follow at residues 58–78 (LLTA…GPIV), 94–114 (WLLL…ALLV), 123–143 (GFPA…LAAL), 189–209 (VLSG…ALAA), 212–232 (LAAV…FPAL), 279–299 (VVLP…FGTL), 308–328 (GIPA…GIAA), 346–366 (LWSI…VWAG), 377–397 (LMGG…AVMQ), 413–433 (GVQN…GIIV), and 442–462 (LIVL…MHVY).

Belongs to the ferroportin (FP) (TC 2.A.100) family. SLC40A subfamily.

The protein localises to the membrane. Its function is as follows. May be involved in iron transport and iron homeostasis. This chain is Solute carrier family 40 member 1, found in Oryza sativa subsp. japonica (Rice).